The chain runs to 363 residues: 3-isopropylmalate dehydrogenase (363 aa).

Position 79–92 (79–92 (GPKWEHLPPNDQPE)) interacts with NAD(+). Positions 100, 110, 139, and 228 each coordinate substrate. Asp-228, Asp-252, and Asp-256 together coordinate Mg(2+). 286–298 (GSAPDIAGKNIAN) contributes to the NAD(+) binding site.

It belongs to the isocitrate and isopropylmalate dehydrogenases family. LeuB type 1 subfamily. Homodimer. It depends on Mg(2+) as a cofactor. Mn(2+) serves as cofactor.

It is found in the cytoplasm. The catalysed reaction is (2R,3S)-3-isopropylmalate + NAD(+) = 4-methyl-2-oxopentanoate + CO2 + NADH. It functions in the pathway amino-acid biosynthesis; L-leucine biosynthesis; L-leucine from 3-methyl-2-oxobutanoate: step 3/4. Catalyzes the oxidation of 3-carboxy-2-hydroxy-4-methylpentanoate (3-isopropylmalate) to 3-carboxy-4-methyl-2-oxopentanoate. The product decarboxylates to 4-methyl-2 oxopentanoate. The protein is 3-isopropylmalate dehydrogenase of Aliivibrio fischeri (strain ATCC 700601 / ES114) (Vibrio fischeri).